The following is a 584-amino-acid chain: Putative adenine deaminase BA_3032/GBAA_3032/BAS2818 (584 aa).

It belongs to the metallo-dependent hydrolases superfamily. Adenine deaminase family.

The catalysed reaction is adenine + H2O + H(+) = hypoxanthine + NH4(+). The polypeptide is Putative adenine deaminase BA_3032/GBAA_3032/BAS2818 (Bacillus anthracis).